The primary structure comprises 110 residues: UPF0060 membrane protein BTH_I2792 (110 aa).

4 consecutive transmembrane segments (helical) span residues 9-29 (ALFV…WLVL), 34-54 (PVWL…LLTL), 64-84 (AAYG…VDGV), and 86-106 (LSRW…VIAL).

It belongs to the UPF0060 family.

It localises to the cell inner membrane. This is UPF0060 membrane protein BTH_I2792 from Burkholderia thailandensis (strain ATCC 700388 / DSM 13276 / CCUG 48851 / CIP 106301 / E264).